Reading from the N-terminus, the 138-residue chain is Basic phospholipase A2 chain HDP-2P (138 aa).

The first 16 residues, 1–16, serve as a signal peptide directing secretion; the sequence is MRILWIVAVCLIGVEG. 7 disulfides stabilise this stretch: Cys42/Cys131, Cys44/Cys60, Cys59/Cys111, Cys65/Cys138, Cys66/Cys104, Cys73/Cys97, and Cys91/Cys102. Ca(2+) contacts are provided by Tyr43, Gly45, and Gly47. His63 is an active-site residue. Asp64 contacts Ca(2+). Asp105 is an active-site residue.

As to quaternary structure, heterodimer of an acidic and a basic chain; non-covalently linked. The toxic basic protein has phospholipase A2 activity (chain HDP-2P) and the non-toxic acidic protein functions as its inhibitor (chain HPD-1I (AC A4VBF0)). It depends on Ca(2+) as a cofactor. Expressed by the venom gland.

The protein localises to the secreted. The enzyme catalyses a 1,2-diacyl-sn-glycero-3-phosphocholine + H2O = a 1-acyl-sn-glycero-3-phosphocholine + a fatty acid + H(+). With respect to regulation, enzymatic activity and neurotoxicity are inhibited by Triton X-100. Triton X-100 has been determined to be located in the center of the hydrophobic channel of the enzyme. In terms of biological role, monomer: snake venom phospholipase A2 (PLA2) that affects neuromuscular transmission presynaptically. It has catalytic activity, anticoagulant activity and weakly inhibits ADP-induced platelet aggregation. PLA2 catalyzes the calcium-dependent hydrolysis of the 2-acyl groups in 3-sn-phosphoglycerides. Heterodimer: shows the same activities as the monomer, but with a lower potency. The sequence is that of Basic phospholipase A2 chain HDP-2P from Vipera nikolskii (Nikolsky's adder).